We begin with the raw amino-acid sequence, 133 residues long: Putative biopolymer transport protein ExbD-like 1 (133 aa).

Residues 1 to 15 (MNYDNYWDEDKPELN) are Cytoplasmic-facing. A helical transmembrane segment spans residues 16–32 (ITPLVDVMLVLLAILMV). At 33-133 (TTPTLTYKEE…FLKVSLITSP (101 aa)) the chain is on the periplasmic side.

The protein belongs to the ExbD/TolR family.

It localises to the cell inner membrane. This chain is Putative biopolymer transport protein ExbD-like 1, found in Helicobacter pylori (strain ATCC 700392 / 26695) (Campylobacter pylori).